We begin with the raw amino-acid sequence, 79 residues long: Small ribosomal subunit protein bS18 (79 aa).

This sequence belongs to the bacterial ribosomal protein bS18 family. In terms of assembly, part of the 30S ribosomal subunit. Forms a tight heterodimer with protein bS6.

Its function is as follows. Binds as a heterodimer with protein bS6 to the central domain of the 16S rRNA, where it helps stabilize the platform of the 30S subunit. This chain is Small ribosomal subunit protein bS18, found in Aster yellows witches'-broom phytoplasma (strain AYWB).